A 304-amino-acid chain; its full sequence is Galactofuranosyltransferase GlfT1 (304 aa).

This sequence belongs to the glycosyltransferase 2 family. Is probably part of an AG biosynthetic complex.

The protein localises to the cell membrane. It is found in the secreted. Its subcellular location is the cell wall. It catalyses the reaction alpha-L-rhamnosyl-(1-&gt;3)-N-acetyl-alpha-D-glucosaminyl-diphospho-trans,octa-cis-decaprenol + 2 UDP-alpha-D-galactofuranose = beta-D-galactofuranosyl-(1-&gt;5)-beta-D-galactofuranosyl-(1-&gt;4)-alpha-L-rhamnosyl-(1-&gt;3)-N-acetyl-alpha-D-glucosaminyl-diphospho-trans,octa-cis-decaprenol + 2 UDP + 2 H(+). The protein operates within cell wall biogenesis; cell wall polysaccharide biosynthesis. Its function is as follows. Involved in the biosynthesis of the arabinogalactan (AG) region of the mycolylarabinogalactan-peptidoglycan (mAGP) complex, an essential component of the mycobacterial cell wall. Catalyzes the transfer of the first two galactofuranosyl (Galf) units from UDP-galactofuranose (UDP-Galf) onto the rhamnosyl-GlcNAc-diphospho-decaprenol (Rha-GlcNAc-PP-C50) acceptor, yielding galactofuranosyl-galactofuranosyl-rhamnosyl-GlcNAc-diphospho-decaprenol (Galf-Galf-Rha-GlcNAc-PP-C50). Thus, GlfT1 is the initiator of galactan synthesis, while GlfT2 continues with the subsequent polymerization events. This chain is Galactofuranosyltransferase GlfT1, found in Mycobacterium tuberculosis (strain CDC 1551 / Oshkosh).